The sequence spans 97 residues: Putative membrane protein insertion efficiency factor (97 aa).

The disordered stretch occupies residues valine 72–glutamine 97.

Belongs to the UPF0161 family.

The protein resides in the cell inner membrane. Functionally, could be involved in insertion of integral membrane proteins into the membrane. The protein is Putative membrane protein insertion efficiency factor of Alcanivorax borkumensis (strain ATCC 700651 / DSM 11573 / NCIMB 13689 / SK2).